The sequence spans 122 residues: Basic phospholipase A2 PL-X (122 aa).

7 cysteine pairs are disulfide-bonded: C26–C115, C28–C44, C43–C95, C49–C122, C50–C88, C57–C81, and C75–C86. Positions 27, 29, and 31 each coordinate Ca(2+). H47 is an active-site residue. D48 is a Ca(2+) binding site. D89 is a catalytic residue.

Belongs to the phospholipase A2 family. Group II subfamily. D49 sub-subfamily. Requires Ca(2+) as cofactor. As to expression, expressed by the venom gland.

It is found in the secreted. It catalyses the reaction a 1,2-diacyl-sn-glycero-3-phosphocholine + H2O = a 1-acyl-sn-glycero-3-phosphocholine + a fatty acid + H(+). In terms of biological role, PLA2 catalyzes the calcium-dependent hydrolysis of the 2-acyl groups in 3-sn-phosphoglycerides. This is Basic phospholipase A2 PL-X from Protobothrops flavoviridis (Habu).